Consider the following 191-residue polypeptide: Thiol:disulfide interchange protein TxlA (191 aa).

The helical transmembrane segment at Ile14–Gly30 threads the bilayer. Positions Val27–Glu148 constitute a Thioredoxin domain. Cysteines 69 and 72 form a disulfide. Polar residues predominate over residues Ser165–Val185. The segment at Ser165–Asp191 is disordered.

The protein belongs to the thioredoxin family.

Its subcellular location is the cell membrane. Required for disulfide bond formation in some proteins. Acts by transferring its disulfide bond to other proteins and is reduced in the process. This is Thiol:disulfide interchange protein TxlA (txlA) from Synechococcus elongatus (strain ATCC 33912 / PCC 7942 / FACHB-805) (Anacystis nidulans R2).